The sequence spans 231 residues: Cytochrome c oxidase subunit 2 (231 aa).

The Mitochondrial intermembrane portion of the chain corresponds to 1 to 14 (MAHPVHVGLKEATS). A helical membrane pass occupies residues 15–45 (PFMEELIAFHDHTLMIIFLISSLVLYIISMM). Topologically, residues 46–59 (LTTKLTHTSTMNAQ) are mitochondrial matrix. Residues 60–87 (EIEIIWTILPAIILIMIALPSLRILYMT) traverse the membrane as a helical segment. At 88–231 (DEFNKPYLTL…WASYLYIVSL (144 aa)) the chain is on the mitochondrial intermembrane side. Positions 161, 196, 198, 200, 204, and 207 each coordinate Cu cation. Mg(2+) is bound at residue E198.

The protein belongs to the cytochrome c oxidase subunit 2 family. As to quaternary structure, component of the cytochrome c oxidase (complex IV, CIV), a multisubunit enzyme composed of 14 subunits. The complex is composed of a catalytic core of 3 subunits MT-CO1, MT-CO2 and MT-CO3, encoded in the mitochondrial DNA, and 11 supernumerary subunits COX4I, COX5A, COX5B, COX6A, COX6B, COX6C, COX7A, COX7B, COX7C, COX8 and NDUFA4, which are encoded in the nuclear genome. The complex exists as a monomer or a dimer and forms supercomplexes (SCs) in the inner mitochondrial membrane with NADH-ubiquinone oxidoreductase (complex I, CI) and ubiquinol-cytochrome c oxidoreductase (cytochrome b-c1 complex, complex III, CIII), resulting in different assemblies (supercomplex SCI(1)III(2)IV(1) and megacomplex MCI(2)III(2)IV(2)). Found in a complex with TMEM177, COA6, COX18, COX20, SCO1 and SCO2. Interacts with TMEM177 in a COX20-dependent manner. Interacts with COX20. Interacts with COX16. The cofactor is Cu cation.

It is found in the mitochondrion inner membrane. It carries out the reaction 4 Fe(II)-[cytochrome c] + O2 + 8 H(+)(in) = 4 Fe(III)-[cytochrome c] + 2 H2O + 4 H(+)(out). Its function is as follows. Component of the cytochrome c oxidase, the last enzyme in the mitochondrial electron transport chain which drives oxidative phosphorylation. The respiratory chain contains 3 multisubunit complexes succinate dehydrogenase (complex II, CII), ubiquinol-cytochrome c oxidoreductase (cytochrome b-c1 complex, complex III, CIII) and cytochrome c oxidase (complex IV, CIV), that cooperate to transfer electrons derived from NADH and succinate to molecular oxygen, creating an electrochemical gradient over the inner membrane that drives transmembrane transport and the ATP synthase. Cytochrome c oxidase is the component of the respiratory chain that catalyzes the reduction of oxygen to water. Electrons originating from reduced cytochrome c in the intermembrane space (IMS) are transferred via the dinuclear copper A center (CU(A)) of subunit 2 and heme A of subunit 1 to the active site in subunit 1, a binuclear center (BNC) formed by heme A3 and copper B (CU(B)). The BNC reduces molecular oxygen to 2 water molecules using 4 electrons from cytochrome c in the IMS and 4 protons from the mitochondrial matrix. The sequence is that of Cytochrome c oxidase subunit 2 (MT-CO2) from Brachyteles hypoxanthus (Northern muriqui).